We begin with the raw amino-acid sequence, 674 residues long: ATP-citrate synthase subunit 1 (674 aa).

Positions 1 to 10 (MPSATSTNGA) are enriched in low complexity. The interval 1 to 26 (MPSATSTNGANGNGNGNGASASPAPG) is disordered. Residues 261 to 281 (LLRY…EVGG) and 312 to 338 (FKTE…KNKS) contribute to the ATP site. Glutamate 278 provides a ligand contact to Mg(2+). Histidine 320 functions as the Tele-phosphohistidine intermediate in the catalytic mechanism. 339–349 (MREAGFYVPDT) provides a ligand contact to CoA.

It belongs to the succinate/malate CoA ligase alpha subunit family. As to quaternary structure, composed of two subunits.

The protein resides in the cytoplasm. The catalysed reaction is oxaloacetate + acetyl-CoA + ADP + phosphate = citrate + ATP + CoA. Catalyzes the formation of cytosolic acetyl-CoA, which is mainly used for the biosynthesis of fatty acids and sterols. The sequence is that of ATP-citrate synthase subunit 1 (ACL1) from Sordaria macrospora (strain ATCC MYA-333 / DSM 997 / K(L3346) / K-hell).